The sequence spans 90 residues: Mitochondrial import inner membrane translocase subunit Tim10 (90 aa).

Residues 29–54 carry the Twin CX3C motif motif; sequence CHRKCVPPHYKEAELSKGESVCLDRC. Cystine bridges form between Cys29–Cys54 and Cys33–Cys50.

It belongs to the small Tim family. In terms of assembly, heterohexamer; composed of 3 copies of TIMM9 and 3 copies of TIMM10/TIM10A, named soluble 70 kDa complex. The complex forms a 6-bladed alpha-propeller structure and associates with the TIMM22 component of the TIM22 complex. Interacts with multi-pass transmembrane proteins in transit. Also forms a complex composed of TIMM9, TIMM10/TIM10A and FXC1/TIM10B.

It localises to the mitochondrion inner membrane. Its function is as follows. Mitochondrial intermembrane chaperone that participates in the import and insertion of multi-pass transmembrane proteins into the mitochondrial inner membrane. May also be required for the transfer of beta-barrel precursors from the TOM complex to the sorting and assembly machinery (SAM complex) of the outer membrane. Acts as a chaperone-like protein that protects the hydrophobic precursors from aggregation and guide them through the mitochondrial intermembrane space. In Rattus norvegicus (Rat), this protein is Mitochondrial import inner membrane translocase subunit Tim10 (Timm10).